The primary structure comprises 86 residues: Large ribosomal subunit protein bL31B (86 aa).

The protein belongs to the bacterial ribosomal protein bL31 family. Type B subfamily. Part of the 50S ribosomal subunit.

The protein is Large ribosomal subunit protein bL31B of Citrobacter koseri (strain ATCC BAA-895 / CDC 4225-83 / SGSC4696).